Consider the following 363-residue polypeptide: mRNA decay activator protein ZFP36L2-A (363 aa).

Residues 131 to 136 carry the RNA-binding motif; that stretch reads RYKTEL. C3H1-type zinc fingers lie at residues 131 to 159 and 169 to 197; these read RYKT…HGFH and KYKT…HNAE. An RNA-binding region spans residues 148-189; the sequence is YGEKCQFAHGFHELRSLTRHPKYKTELCRTFHTIGFCPYGPR. Residues 308–349 form a disordered region; it reads ESPVFDAPPSPPDSLSDRDSYLSGSLSSGSLSGSDSPTLDSN. Low complexity predominate over residues 328 to 347; the sequence is YLSGSLSSGSLSGSDSPTLD.

Post-translationally, phosphorylated. In terms of tissue distribution, widely expressed in adults.

It is found in the nucleus. It localises to the cytoplasm. Functionally, zinc-finger RNA-binding protein that destabilizes several cytoplasmic AU-rich element (ARE)-containing mRNA transcripts by promoting their poly(A) tail removal or deadenylation, and hence provide a mechanism for attenuating protein synthesis. Acts as a 3'-untranslated region (UTR) ARE mRNA-binding adapter protein to communicate signaling events to the mRNA decay machinery. Functions by recruiting the CCR4-NOT deadenylase complex and probably other components of the cytoplasmic RNA decay machinery to the bound ARE-containing mRNAs, and hence promotes ARE-mediated mRNA deadenylation and decay processes. Binds to 3'-UTR ARE of numerous mRNAs. Also induces the degradation of ARE-containing mRNAs even in absence of poly(A) tail. Required for tubulogenesis during pronephros development. In Xenopus laevis (African clawed frog), this protein is mRNA decay activator protein ZFP36L2-A (zfp36l2-A).